A 91-amino-acid chain; its full sequence is Histone H1, sperm (91 aa).

A disordered region spans residues 1–25 (PGSPQKRAASPRKSPRKGSPKKSPM). Positions 9 to 20 (ASPRKSPRKGSP) are enriched in basic residues. Positions 18 to 91 (GSPKKSPMIR…TGATGRFRVG (74 aa)) constitute an H15 domain.

It belongs to the histone H1/H5 family.

It localises to the nucleus. The protein resides in the chromosome. Functionally, histones H1 are necessary for the condensation of nucleosome chains into higher-order structures. The chain is Histone H1, sperm from Sphaerechinus granularis (Purple sea urchin).